A 248-amino-acid polypeptide reads, in one-letter code: Probable transcriptional regulatory protein FTN_1028 (248 aa).

The protein belongs to the TACO1 family.

Its subcellular location is the cytoplasm. This Francisella tularensis subsp. novicida (strain U112) protein is Probable transcriptional regulatory protein FTN_1028.